The following is a 207-amino-acid chain: uncharacterized protein (207 aa).

Transmembrane regions (helical) follow at residues 28-48, 59-79, 112-132, 140-160, and 165-185; these read IAVL…IVFV, EGFI…FLIV, MFLL…VAGL, FILA…FIGY, and LITQ…LWYV.

Its subcellular location is the cell membrane. This is an uncharacterized protein from Bacillus subtilis (strain 168).